Here is a 109-residue protein sequence, read N- to C-terminus: Mitochondrial import inner membrane translocase subunit TIM12 (109 aa).

Serine 2 is modified (N-acetylserine). The short motif at 40–66 (CLEKCIPHEGFGEPDLTKGEQCCIDRC) is the Twin CX3C motif element. 2 cysteine pairs are disulfide-bonded: cysteine 40–cysteine 66 and cysteine 44–cysteine 62.

The protein belongs to the small Tim family. In terms of assembly, component of the TIM22 complex, whose core is composed of TIM18, TIM22 and TIM54, associated with the peripheral proteins MRS5/TIM12 and the 70 kDa heterohexamer composed of TIM9 and TIM10 (or TIM8 and TIM13). Interacts directly with both the TIM22 protein and the TIM9-TIM10 heterohexamer. Interacts with multi-pass transmembrane proteins in transit.

The protein localises to the mitochondrion inner membrane. The protein resides in the mitochondrion intermembrane space. Functionally, essential component of the TIM22 complex, a complex that mediates the import and insertion of multi-pass transmembrane proteins into the mitochondrial inner membrane. The TIM22 complex forms a twin-pore translocase that uses the membrane potential as external driving force. In the TIM22 complex, it acts as a docking point for the soluble TIM9-TIM10 heterohexamer that guides the target proteins in transit through the aqueous mitochondrial intermembrane space. This is Mitochondrial import inner membrane translocase subunit TIM12 (TIM12) from Saccharomyces cerevisiae (strain ATCC 204508 / S288c) (Baker's yeast).